The sequence spans 484 residues: ATP synthase subunit beta (484 aa).

162–169 (GGAGVGKT) lines the ATP pocket.

The protein belongs to the ATPase alpha/beta chains family. F-type ATPases have 2 components, CF(1) - the catalytic core - and CF(0) - the membrane proton channel. CF(1) has five subunits: alpha(3), beta(3), gamma(1), delta(1), epsilon(1). CF(0) has four main subunits: a(1), b(1), b'(1) and c(9-12).

It is found in the cellular thylakoid membrane. It catalyses the reaction ATP + H2O + 4 H(+)(in) = ADP + phosphate + 5 H(+)(out). Functionally, produces ATP from ADP in the presence of a proton gradient across the membrane. The catalytic sites are hosted primarily by the beta subunits. In Trichodesmium erythraeum (strain IMS101), this protein is ATP synthase subunit beta.